The primary structure comprises 458 residues: MVHYPSDRTRRLSDTIAAIATPPGQGSVGIVRVSGPFCRQIAEQVTGRVPPPRYATFCHFRNRYGEILDQGLILYFPGPHSFTGEDVLELQGHGGPAIMDWLLSSVLQLGVRLARPGEFSERAFLNNKIDLAQAEAIADLIESASEQAARSALRSLHGEFSAQIQTLREQLTELRCVVEANIDFSDEDIDFIERGMVAERLKEIQSTLQSIHRSARQGALLREGVRVVLAGRPNVGKSSLHNRLAGFEAAIVTDVPGTTRDLLRENITIDGLPIHLSDTAGLHNSKDTIEQEGMRRTREELIHADHVLLVADDQSGLTEAEQAILDELPDDVTYTLIFNKIDLSGAPAGRWEELQGIALRLSALTGAGMDLLCQRLKECAGFDRESEGCFSARRRHLEALQRAGAAVVVARKILGDKGAEEILAEELRQAQNALAEITGEYRSDDLLGEIFSTFCIGK.

3 residues coordinate (6S)-5-formyl-5,6,7,8-tetrahydrofolate: R32, E89, and K128. The region spanning G224–G381 is the TrmE-type G domain. Position 234 (N234) interacts with K(+). Residues N234 to S239, T253 to T259, and D278 to G281 each bind GTP. S238 contacts Mg(2+). K(+)-binding residues include T253, V255, and T258. T259 lines the Mg(2+) pocket. Residue K458 coordinates (6S)-5-formyl-5,6,7,8-tetrahydrofolate.

It belongs to the TRAFAC class TrmE-Era-EngA-EngB-Septin-like GTPase superfamily. TrmE GTPase family. As to quaternary structure, homodimer. Heterotetramer of two MnmE and two MnmG subunits. It depends on K(+) as a cofactor.

Its subcellular location is the cytoplasm. Functionally, exhibits a very high intrinsic GTPase hydrolysis rate. Involved in the addition of a carboxymethylaminomethyl (cmnm) group at the wobble position (U34) of certain tRNAs, forming tRNA-cmnm(5)s(2)U34. This is tRNA modification GTPase MnmE from Nitrosococcus oceani (strain ATCC 19707 / BCRC 17464 / JCM 30415 / NCIMB 11848 / C-107).